An 86-amino-acid polypeptide reads, in one-letter code: Weak neurotoxin 6 (86 aa).

An N-terminal signal peptide occupies residues M1–T21. 5 disulfides stabilise this stretch: C24/C45, C27/C32, C38/C63, C67/C78, and C79/C84.

This sequence belongs to the three-finger toxin family. Ancestral subfamily. Orphan group II sub-subfamily. In terms of tissue distribution, expressed by the venom gland.

It localises to the secreted. Binds with low affinity to muscular (alpha-1-beta-1-delta-epsilon/CHRNA1-CHRNB1-CHRND-CHRNE) and very low affinity to neuronal (alpha-7/CHRNA7) nicotinic acetylcholine receptor (nAChR). The sequence is that of Weak neurotoxin 6 from Naja sputatrix (Malayan spitting cobra).